Consider the following 429-residue polypeptide: G2/mitotic-specific cyclin-B1 (429 aa).

The segment at 71-114 (TGKVSAKIPPPKPLEKVPPVSEPEVELAETHEPEPVMDEKLSPE) is disordered. Lys-73 carries the post-translational modification N6-acetyllysine. Residues 98–112 (AETHEPEPVMDEKLS) show a composition bias toward basic and acidic residues. Ser-122 is subject to Phosphoserine; by CDK1. Residue Ser-124 is modified to Phosphoserine. Position 129 is a phosphoserine; by PLK1 (Ser-129). Ser-143 carries the post-translational modification Phosphoserine. Interaction with CDK2 stretches follow at residues 165–173 (EYVKDIYAY) and 254–257 (YEEM). A Phosphothreonine modification is found at Thr-317.

It belongs to the cyclin family. Cyclin AB subfamily. As to quaternary structure, interacts with the CDC2 protein kinase to form a serine/threonine kinase holoenzyme complex also known as maturation promoting factor (MPF). The cyclin subunit imparts substrate specificity to the complex. Binds HEI10. Interacts with catalytically active RALBP1 and CDC2 during mitosis to form an endocytotic complex during interphase. Interacts with CCNF; interaction is required for nuclear localization. Interacts with CDK5RAP3. Interacts with RFPL4A and UBE2A. Interacts with INCA1. Ubiquitinated by the SCF(NIPA) complex during interphase, leading to its destruction. Not ubiquitinated during G2/M phases. In terms of processing, phosphorylated by PLK1 at Ser-129 on centrosomes during prophase: phosphorylation by PLK1 does not cause nuclear import. Phosphorylation at Ser-143 was also reported to be mediated by PLK1 but Ser-129 seems to be the primary phosphorylation site.

It localises to the cytoplasm. Its subcellular location is the nucleus. The protein resides in the cytoskeleton. The protein localises to the microtubule organizing center. It is found in the centrosome. Its function is as follows. Essential for the control of the cell cycle at the G2/M (mitosis) transition. In Mesocricetus auratus (Golden hamster), this protein is G2/mitotic-specific cyclin-B1 (CCNB1).